An 84-amino-acid chain; its full sequence is Succinate dehydrogenase membrane anchor subunit (84 aa).

Over Met-1–Thr-3 the chain is Mitochondrial matrix. Residues Phe-4 to Ile-24 traverse the membrane as a helical segment. Topologically, residues Glu-25 to Leu-31 are mitochondrial intermembrane. The helical transmembrane segment at Ser-32–Phe-52 threads the bilayer. Residue His-37 coordinates heme. Tyr-49 is a binding site for a ubiquinone. At Gln-53 to Met-58 the chain is on the mitochondrial matrix side. Residues Leu-59–Ile-81 traverse the membrane as a helical segment. The Mitochondrial intermembrane segment spans residues Lys-82–Thr-84.

As to quaternary structure, part of an enzyme complex containing four subunits: a flavoprotein, an iron-sulfur protein, plus two membrane-anchoring proteins. It depends on heme as a cofactor.

It localises to the mitochondrion inner membrane. The protein operates within carbohydrate metabolism; tricarboxylic acid cycle. In terms of biological role, membrane-anchoring subunit of succinate dehydrogenase (SDH). In Chondrus crispus (Carrageen Irish moss), this protein is Succinate dehydrogenase membrane anchor subunit (SDH4).